Here is a 484-residue protein sequence, read N- to C-terminus: MEQFNVWFTVSEVQGLVKSGGLADVAKALPQALKALHQQVAIALPAYRSVPGKEDAELVLETELTHWPHTQYRVLKRDLDGVPIYLIDCPAYFDRPALYAENNQAYADNGERFGFFSAACLDVLPKLGIQPDIIHANDWHTGLVPFLLKTRYRYDSFFEQVKSVLTVHNAIFKGIFSYHQLEVIPELNLSGMEFLQYGHDHVSMLRAGIAFADKVNAVSPNYAAELLTPLGAHGLVDDFVRRARDLHGIVNGCDYSEWNPRTDHYLPATYSDEPESMRKGKALCKTALQEELHLPVTDVPLFGMVCRLTHQKGFHYLLPILEQFLRNNVQVVIVGTGEPEVAARLNKIAHYHRAKFAFVETYSERLAHWVEAGSDFFLMPSEFEACGLNQIYSMAYGTLPIVREVGGLKDTVNDYDKFPERATGFGYQEPTPEALLITMQRALLFYLQQPEEMLKVQQRAMQQNFSWEESAQEYMKMYRLARFG.

Lys18 is an ADP-alpha-D-glucose binding site.

It belongs to the glycosyltransferase 1 family. Bacterial/plant glycogen synthase subfamily.

The enzyme catalyses [(1-&gt;4)-alpha-D-glucosyl](n) + ADP-alpha-D-glucose = [(1-&gt;4)-alpha-D-glucosyl](n+1) + ADP + H(+). The protein operates within glycan biosynthesis; glycogen biosynthesis. Functionally, synthesizes alpha-1,4-glucan chains using ADP-glucose. This is Glycogen synthase from Vibrio cholerae serotype O1 (strain ATCC 39541 / Classical Ogawa 395 / O395).